Consider the following 303-residue polypeptide: Agmatinase (303 aa).

Positions 126, 149, 151, 153, 230, and 232 each coordinate Mn(2+).

Belongs to the arginase family. Agmatinase subfamily. Requires Mn(2+) as cofactor.

The catalysed reaction is agmatine + H2O = urea + putrescine. In terms of biological role, catalyzes the formation of putrescine from agmatine. In Blochmanniella floridana, this protein is Agmatinase (speB).